The chain runs to 881 residues: Alanine--tRNA ligase (881 aa).

Zn(2+) is bound by residues H563, H567, C672, and H676.

Belongs to the class-II aminoacyl-tRNA synthetase family. It depends on Zn(2+) as a cofactor.

It is found in the cytoplasm. The catalysed reaction is tRNA(Ala) + L-alanine + ATP = L-alanyl-tRNA(Ala) + AMP + diphosphate. Its function is as follows. Catalyzes the attachment of alanine to tRNA(Ala) in a two-step reaction: alanine is first activated by ATP to form Ala-AMP and then transferred to the acceptor end of tRNA(Ala). Also edits incorrectly charged Ser-tRNA(Ala) and Gly-tRNA(Ala) via its editing domain. In Azorhizobium caulinodans (strain ATCC 43989 / DSM 5975 / JCM 20966 / LMG 6465 / NBRC 14845 / NCIMB 13405 / ORS 571), this protein is Alanine--tRNA ligase.